The following is a 226-amino-acid chain: Glutathione S-transferase-like protein gedE (226 aa).

The GST N-terminal domain maps to 4–85; it reads LLPIKVWGQG…YLVERYDTAH (82 aa). Positions 92–226 constitute a GST C-terminal domain; sequence DTNDAQHARQ…VLSAVMPPPS (135 aa).

It belongs to the GST superfamily.

It functions in the pathway secondary metabolite biosynthesis. Functionally, glutathione S-transferase-like protein; part of the gene cluster that mediates the biosynthesis of geodin, an intermediate in the biosynthesis of other natural products. The pathway begins with the synthesis of atrochrysone thioester by the polyketide synthase (PKS) gedC. The atrochrysone carboxyl ACP thioesterase gedB then breaks the thioester bond and releases the atrochrysone carboxylic acid from gedC. The atrochrysone carboxylic acid is then converted to atrochrysone which is further transformed into emodinanthrone. The next step is performed by the emodinanthrone oxygenase gedH that catalyzes the oxidation of emodinanthrone to emodin. Emodin O-methyltransferase encoded probably by gedA then catalyzes methylation of the 8-hydroxy group of emodin to form questin. Ring cleavage of questin by questin oxidase gedK leads to desmethylsulochrin via several intermediates including questin epoxide. Another methylation step probably catalyzed by methyltransferase gedG leads to the formation of sulochrin which is further converted to dihydrogeodin by the sulochrin halogenase gedL. Finally, the dihydrogeodin oxidase gedJ catalyzes the stereospecific phenol oxidative coupling reaction converting dihydrogeodin to geodin. The chain is Glutathione S-transferase-like protein gedE from Aspergillus terreus (strain NIH 2624 / FGSC A1156).